We begin with the raw amino-acid sequence, 214 residues long: Glutathione S-transferase 1 (214 aa).

In terms of domain architecture, GST N-terminal spans 2–83; it reads APMKLYGAVM…YAARKNKPEL (82 aa). Glutathione is bound by residues Ser12, 41–42, 54–55, and 67–68; these read HK, QV, and ES. A GST C-terminal domain is found at 88–214; the sequence is NLEEAAMVDV…KVAALMKPSA (127 aa).

It belongs to the GST superfamily. Phi family. As to quaternary structure, homodimer or heterodimer of GST-I and GST-IV (=GST-II). In terms of tissue distribution, expressed in the stem and leaves, lower levels are seen in the pollen and endosperm.

It carries out the reaction RX + glutathione = an S-substituted glutathione + a halide anion + H(+). Its function is as follows. Conjugation of reduced glutathione to a wide number of exogenous and endogenous hydrophobic electrophiles. Involved in the detoxification of certain herbicides. The chain is Glutathione S-transferase 1 (GST1) from Zea mays (Maize).